A 460-amino-acid polypeptide reads, in one-letter code: Wadjet protein JetA (460 aa).

In terms of biological role, component of antiplasmid transformation system Wadjet type I, composed of JetA, JetB, JetC and JetD. Expression of Wadjet type I in B.subtilis (strain BEST7003) reduces the transformation efficiency of plasmid pHCMC05. In Bacillus cereus (strain Q1), this protein is Wadjet protein JetA.